A 357-amino-acid chain; its full sequence is Sulfate/thiosulfate import ATP-binding protein CysA (357 aa).

The ABC transporter domain maps to 3 to 237 (ITIQNLNKHF…PENAFVTEFL (235 aa)). 35-42 (GPSGCGKT) is an ATP binding site.

It belongs to the ABC transporter superfamily. Sulfate/tungstate importer (TC 3.A.1.6) family. The complex is composed of two ATP-binding proteins (CysA), two transmembrane proteins (CysT and CysW) and a solute-binding protein (CysP).

Its subcellular location is the cell inner membrane. The catalysed reaction is sulfate(out) + ATP + H2O = sulfate(in) + ADP + phosphate + H(+). It catalyses the reaction thiosulfate(out) + ATP + H2O = thiosulfate(in) + ADP + phosphate + H(+). In terms of biological role, part of the ABC transporter complex CysAWTP involved in sulfate/thiosulfate import. Responsible for energy coupling to the transport system. The sequence is that of Sulfate/thiosulfate import ATP-binding protein CysA from Neisseria meningitidis serogroup B (strain ATCC BAA-335 / MC58).